The sequence spans 1798 residues: DNA polymerase II large subunit (1798 aa).

Residues 286–309 are disordered; sequence EKGKSSEENKDESKAEDTGTESVA. One can recognise a DOD-type homing endonuclease domain in the interval 1184 to 1319; it reads VVGYYLAEGY…ETLLLAKFGI (136 aa). The disordered stretch occupies residues 1699–1798; that stretch reads TGHSNGKNGY…GISLDEFFGS (100 aa). Residues 1714–1731 show a composition bias toward low complexity; the sequence is GKNGKASKKSGSLASKLS. Residues 1733 to 1753 show a composition bias toward basic and acidic residues; that stretch reads KGKEPSKKKESAKPKRSEKVK.

It belongs to the archaeal DNA polymerase II family. As to quaternary structure, heterodimer of a large subunit and a small subunit. Post-translationally, this protein undergoes a protein self splicing that involves a post-translational excision of the intervening region (intein) followed by peptide ligation.

It catalyses the reaction DNA(n) + a 2'-deoxyribonucleoside 5'-triphosphate = DNA(n+1) + diphosphate. The catalysed reaction is Exonucleolytic cleavage in the 3'- to 5'-direction to yield nucleoside 5'-phosphates.. Functionally, possesses two activities: a DNA synthesis (polymerase) and an exonucleolytic activity that degrades single-stranded DNA in the 3'- to 5'-direction. Has a template-primer preference which is characteristic of a replicative DNA polymerase. This chain is DNA polymerase II large subunit (polC), found in Thermococcus kodakarensis (strain ATCC BAA-918 / JCM 12380 / KOD1) (Pyrococcus kodakaraensis (strain KOD1)).